Here is a 445-residue protein sequence, read N- to C-terminus: Histidinol dehydrogenase (445 aa).

3 residues coordinate NAD(+): Y138, Q199, and N222. S245, Q267, and H270 together coordinate substrate. The Zn(2+) site is built by Q267 and H270. Active-site proton acceptor residues include E335 and H336. 4 residues coordinate substrate: H336, D369, E423, and H428. D369 is a binding site for Zn(2+). H428 provides a ligand contact to Zn(2+).

This sequence belongs to the histidinol dehydrogenase family. Requires Zn(2+) as cofactor.

It carries out the reaction L-histidinol + 2 NAD(+) + H2O = L-histidine + 2 NADH + 3 H(+). The protein operates within amino-acid biosynthesis; L-histidine biosynthesis; L-histidine from 5-phospho-alpha-D-ribose 1-diphosphate: step 9/9. Functionally, catalyzes the sequential NAD-dependent oxidations of L-histidinol to L-histidinaldehyde and then to L-histidine. The protein is Histidinol dehydrogenase of Burkholderia pseudomallei (strain 1710b).